Here is a 277-residue protein sequence, read N- to C-terminus: 4-hydroxy-3-methylbut-2-enyl diphosphate reductase (277 aa).

Residue Cys-12 coordinates [4Fe-4S] cluster. His-36 and His-70 together coordinate (2E)-4-hydroxy-3-methylbut-2-enyl diphosphate. Dimethylallyl diphosphate-binding residues include His-36 and His-70. Residues His-36 and His-70 each contribute to the isopentenyl diphosphate site. A [4Fe-4S] cluster-binding site is contributed by Cys-92. Residue His-120 coordinates (2E)-4-hydroxy-3-methylbut-2-enyl diphosphate. His-120 provides a ligand contact to dimethylallyl diphosphate. His-120 is a binding site for isopentenyl diphosphate. Glu-122 functions as the Proton donor in the catalytic mechanism. A (2E)-4-hydroxy-3-methylbut-2-enyl diphosphate-binding site is contributed by Thr-158. Cys-186 provides a ligand contact to [4Fe-4S] cluster. The (2E)-4-hydroxy-3-methylbut-2-enyl diphosphate site is built by Ser-214, Asn-216, and Ser-258. 3 residues coordinate dimethylallyl diphosphate: Ser-214, Asn-216, and Ser-258. Positions 214, 216, and 258 each coordinate isopentenyl diphosphate.

The protein belongs to the IspH family. [4Fe-4S] cluster is required as a cofactor.

The catalysed reaction is isopentenyl diphosphate + 2 oxidized [2Fe-2S]-[ferredoxin] + H2O = (2E)-4-hydroxy-3-methylbut-2-enyl diphosphate + 2 reduced [2Fe-2S]-[ferredoxin] + 2 H(+). The enzyme catalyses dimethylallyl diphosphate + 2 oxidized [2Fe-2S]-[ferredoxin] + H2O = (2E)-4-hydroxy-3-methylbut-2-enyl diphosphate + 2 reduced [2Fe-2S]-[ferredoxin] + 2 H(+). Its pathway is isoprenoid biosynthesis; dimethylallyl diphosphate biosynthesis; dimethylallyl diphosphate from (2E)-4-hydroxy-3-methylbutenyl diphosphate: step 1/1. It functions in the pathway isoprenoid biosynthesis; isopentenyl diphosphate biosynthesis via DXP pathway; isopentenyl diphosphate from 1-deoxy-D-xylulose 5-phosphate: step 6/6. Its function is as follows. Catalyzes the conversion of 1-hydroxy-2-methyl-2-(E)-butenyl 4-diphosphate (HMBPP) into a mixture of isopentenyl diphosphate (IPP) and dimethylallyl diphosphate (DMAPP). Acts in the terminal step of the DOXP/MEP pathway for isoprenoid precursor biosynthesis. The sequence is that of 4-hydroxy-3-methylbut-2-enyl diphosphate reductase from Campylobacter jejuni subsp. doylei (strain ATCC BAA-1458 / RM4099 / 269.97).